The chain runs to 270 residues: Insulin-like growth factor-binding protein-like 1 (270 aa).

A signal peptide spans 1–17 (MPRLPLLLLLLPSLARG). The region spanning 26 to 101 (RHPECSPCQQ…PEGTGLCVCA (76 aa)) is the IGFBP N-terminal domain. Disulfide bonds link cysteine 30-cysteine 55, cysteine 33-cysteine 57, cysteine 38-cysteine 58, cysteine 44-cysteine 61, cysteine 69-cysteine 83, cysteine 77-cysteine 98, and cysteine 107-cysteine 143. Residues 87–145 (ASGTAPEGTGLCVCAQRGAVCGSDGRSYSSICALRLRARHAPRAHHGHLHKARDGPCEF) enclose the Kazal-like domain. An Ig-like C2-type domain is found at 147 to 251 (PVVLMPPRDI…GEAQSHGTVT (105 aa)). Asparagine 158 carries N-linked (GlcNAc...) asparagine glycosylation. A disulfide bond links cysteine 168 and cysteine 235.

Its subcellular location is the secreted. IGF-binding proteins prolong the half-life of IGFs and have been shown to either inhibit or stimulate the growth promoting effects of the IGFs in cell culture. They alter the interaction of IGFs with their cell surface receptors. This is Insulin-like growth factor-binding protein-like 1 (Igfbpl1) from Mus musculus (Mouse).